Here is a 117-residue protein sequence, read N- to C-terminus: ORF2 protein (117 aa).

The segment at 43–104 (NLGRPPAPQP…AGDGGDGELA (62 aa)) is disordered. Residues 79–98 (GTGGDAAGGEAGGSRGAGDG) are compositionally biased toward gly residues.

The chain is ORF2 protein from Homo sapiens (Human).